Consider the following 277-residue polypeptide: MEAPGPAQAAAAESNSREVTEDAADWAPALCPSPEARSPEAPAYRLQDCDALVTMGTGTFGRVHLVKEKTAKHFFALKVMSIPDVIRRKQEQHVHNEKSVLKEVSHPFLIRLFWTWHEERFLYMLMEYVPGGELFSYLRNRGHFSSTTGLFYSAEIICAIEYLHSKEIVYRDLKPENILLDRDGHIKLTDFGFAKKLVDRTWTLCGTPEYLAPEVIQSKGHGRAVDWWALGILIFEMLSGFPPFFDDNPFGIYQKILAGKLYFPRHLDFHVKTGRMM.

Over residues 1 to 12 (MEAPGPAQAAAA) the composition is skewed to low complexity. A disordered region spans residues 1 to 40 (MEAPGPAQAAAAESNSREVTEDAADWAPALCPSPEARSPE). The Protein kinase domain occupies 49–277 (CDALVTMGTG…DFHVKTGRMM (229 aa)). Residues 55–63 (MGTGTFGRV) and lysine 78 each bind ATP. Aspartate 172 functions as the Proton acceptor in the catalytic mechanism. At threonine 203 the chain carries Phosphothreonine.

The protein belongs to the protein kinase superfamily. AGC Ser/Thr protein kinase family. cAMP subfamily. In terms of tissue distribution, ubiquitous.

It carries out the reaction L-seryl-[protein] + ATP = O-phospho-L-seryl-[protein] + ADP + H(+). It catalyses the reaction L-threonyl-[protein] + ATP = O-phospho-L-threonyl-[protein] + ADP + H(+). The polypeptide is Putative serine/threonine-protein kinase PRKY (PRKY) (Homo sapiens (Human)).